Consider the following 150-residue polypeptide: D-aminoacyl-tRNA deacylase (150 aa).

The short motif at 140–141 (GP) is the Gly-cisPro motif, important for rejection of L-amino acids element.

This sequence belongs to the DTD family. As to quaternary structure, homodimer.

The protein resides in the cytoplasm. The enzyme catalyses glycyl-tRNA(Ala) + H2O = tRNA(Ala) + glycine + H(+). The catalysed reaction is a D-aminoacyl-tRNA + H2O = a tRNA + a D-alpha-amino acid + H(+). It catalyses the reaction D-tyrosyl-tRNA(Tyr) + H2O = D-tyrosine + tRNA(Tyr). An aminoacyl-tRNA editing enzyme that deacylates mischarged D-aminoacyl-tRNAs. Hydrolyzes D-tyrosyl-tRNA(Tyr) into D-tyrosine and free tRNA(Tyr). May also deacylate mischarged D-leucyl-tRNA(Leu). Also deacylates mischarged glycyl-tRNA(Ala), protecting cells against glycine mischarging by AlaRS. Acts via tRNA-based rather than protein-based catalysis; rejects L-amino acids rather than detecting D-amino acids in the active site. By recycling D-aminoacyl-tRNA to D-amino acids and free tRNA molecules, this enzyme counteracts the toxicity associated with the formation of D-aminoacyl-tRNA entities in vivo and helps enforce protein L-homochirality. This chain is D-aminoacyl-tRNA deacylase, found in Saccharomyces cerevisiae (strain ATCC 204508 / S288c) (Baker's yeast).